A 742-amino-acid polypeptide reads, in one-letter code: MKDDFAEEEEVQSFGYKRFGIQEGTQCTKCKNNWALKFSIILLYILCALLTITVAILGYKVVEKMDNVTGGMETSRQTYDDKLTAVESDLKKLGDQTGKKAISTNSELSTFRSDILDLRQQLREITEKTSKNKDTLEKLQASGDALVDRQSQLKETLENNSFLITTVNKTLQAYNGYVTNLQQDTSVLQGNLQNQMYSHNVVIMNLNNLNLTQVQQRNLITNLQRSVDDTSQAIQRIKNDFQNLQQVFLQAKKDTDWLKEKVQSLQTLAANNSALAKANNDTLEDMNSQLNSFTGQMENITTISQANEQNLKDLQDLHKDAENRTAIKFNQLEERFQLFETDIVNIISNISYTAHHLRTLTSNLNEVRTTCTDTLTKHTDDLTSLNNTLANIRLDSVSLRMQQDLMRSRLDTEVANLSVIMEEMKLVDSKHGQLIKNFTILQGPPGPRGPRGDRGSQGPPGPTGNKGQKGEKGEPGPPGPAGERGPIGPAGPPGERGGKGSKGSQGPKGSRGSPGKPGPQGSSGDPGPPGPPGKEGLPGPQGPPGFQGLQGTVGEPGVPGPRGLPGLPGVPGMPGPKGPPGPPGPSGAVVPLALQNEPTPAPEDNGCPPHWKNFTDKCYYFSVEKEIFEDAKLFCEDKSSHLVFINTREEQQWIKKQMVGRESHWIGLTDSERENEWKWLDGTSPDYKNWKAGQPDNWGHGHGPGEDCAGLIYAGQWNDFQCEDVNNFICEKDRETVLSSAL.

At 1-37 (MKDDFAEEEEVQSFGYKRFGIQEGTQCTKCKNNWALK) the chain is on the cytoplasmic side. The helical; Signal-anchor for type II membrane protein transmembrane segment at 38–58 (FSIILLYILCALLTITVAILG) threads the bilayer. At 59–742 (YKVVEKMDNV…DRETVLSSAL (684 aa)) the chain is on the extracellular side. Asn67 carries an N-linked (GlcNAc...) asparagine glycan. Residues 73–141 (ETSRQTYDDK…NKDTLEKLQA (69 aa)) are a coiled coil. Residues Asn159, Asn168, and Asn271 are each glycosylated (N-linked (GlcNAc...) asparagine). Residues 215–328 (QQRNLITNLQ…KDAENRTAIK (114 aa)) adopt a coiled-coil conformation. Residues 439–608 (TILQGPPGPR…TPAPEDNGCP (170 aa)) form a disordered region. 3 Collagen-like domains span residues 443 to 472 (GPPG…KGEK), 473 to 529 (GEPG…PGPP), and 530 to 589 (GPPG…SGAV). 2 stretches are compositionally biased toward low complexity: residues 502 to 525 (KGSQ…SSGD) and 534 to 556 (KEGL…VGEP). The segment covering 571–585 (PGMPGPKGPPGPPGP) has biased composition (pro residues). Disulfide bonds link Cys607/Cys618, Cys635/Cys730, and Cys708/Cys722. The C-type lectin domain occupies 614 to 731 (FTDKCYYFSV…CEDVNNFICE (118 aa)). Ca(2+)-binding residues include Phe644, Asn646, Glu650, Asp670, and Glu674. Lys691, Gln694, and Asp696 together coordinate a carbohydrate. Gln694, Asp696, Asn697, Glu706, Asp707, Asn718, Asp719, and Glu731 together coordinate Ca(2+). Glu706 is a binding site for a carbohydrate. 2 residues coordinate a carbohydrate: Asn718 and Asp719.

In terms of assembly, the extracellular domain forms a stable trimer. The extracellular domain interacts with fibrillar amyloid-beta peptide. Expressed in perivascular macrophages. Expressed in plaques-surrounding reactive astrocytes and in perivascular astrocytes associated with cerebral amyloid angiopathy (CAA) in the temporal cortex of Alzheimer patient (at protein level). Strongly expressed in placenta. Moderately expressed in heart, skeletal muscle, small intestine and lung. Weakly expressed in brain, colon, thymus and kidney. Expressed in nurse-like cells. Expressed in reactive astrocytes and vascular/perivascular cells in the brain of Alzheimer patient.

It localises to the membrane. Scavenger receptor that displays several functions associated with host defense. Promotes binding and phagocytosis of Gram-positive, Gram-negative bacteria and yeast. Mediates the recognition, internalization and degradation of oxidatively modified low density lipoprotein (oxLDL) by vascular endothelial cells. Binds to several carbohydrates including Gal-type ligands, D-galactose, L- and D-fucose, GalNAc, T and Tn antigens in a calcium-dependent manner and internalizes specifically GalNAc in nurse-like cells. Also binds to sialyl Lewis X or a trisaccharide and asialo-orosomucoid (ASOR). May also play a role in the clearance of amyloid-beta in Alzheimer disease. This Homo sapiens (Human) protein is Collectin-12 (COLEC12).